Here is a 401-residue protein sequence, read N- to C-terminus: S-adenosylmethionine synthase (401 aa).

137-142 contributes to the ATP binding site; it reads GQGSGD.

The protein belongs to the AdoMet synthase 2 family. Mg(2+) is required as a cofactor.

The enzyme catalyses L-methionine + ATP + H2O = S-adenosyl-L-methionine + phosphate + diphosphate. Its pathway is amino-acid biosynthesis; S-adenosyl-L-methionine biosynthesis; S-adenosyl-L-methionine from L-methionine: step 1/1. Its function is as follows. Catalyzes the formation of S-adenosylmethionine from methionine and ATP. This Haloquadratum walsbyi (strain DSM 16790 / HBSQ001) protein is S-adenosylmethionine synthase.